A 36-amino-acid chain; its full sequence is Pancreatic polypeptide (36 aa).

A Tyrosine amide modification is found at Tyr-36.

It belongs to the NPY family.

Its subcellular location is the secreted. Its function is as follows. Hormone secreted by pancreatic cells that acts as a regulator of pancreatic and gastrointestinal functions probably by signaling through the G protein-coupled receptor NPY4R2. In Equus przewalskii (Przewalski's horse), this protein is Pancreatic polypeptide (PPY).